We begin with the raw amino-acid sequence, 72 residues long: Mitotic-spindle organizing protein 1 (72 aa).

It belongs to the MOZART1 family. As to quaternary structure, part of the gamma-tubulin complex.

The protein localises to the cytoplasm. The protein resides in the cytoskeleton. It localises to the microtubule organizing center. It is found in the centrosome. Its subcellular location is the spindle. Functionally, required for gamma-tubulin complex recruitment to the centrosome. In Xenopus laevis (African clawed frog), this protein is Mitotic-spindle organizing protein 1 (mzt1).